Consider the following 378-residue polypeptide: Cytochrome b (378 aa).

Helical transmembrane passes span 34-54 (FGSL…FLAM), 78-99 (WFLR…FMHV), 114-134 (WNTG…GYVL), and 179-199 (FFTF…IHLL). Positions 84 and 98 each coordinate heme b. The heme b site is built by His-183 and His-197. A ubiquinone is bound at residue His-202. The next 4 membrane-spanning stretches (helical) occupy residues 227–247 (YKDI…IWKF), 289–309 (LGGV…PFTH), 321–341 (LNQI…WIGA), and 348–368 (YVLT…INPL).

This sequence belongs to the cytochrome b family. As to quaternary structure, the main subunits of complex b-c1 are: cytochrome b, cytochrome c1 and the Rieske protein. The cofactor is heme b.

It localises to the mitochondrion inner membrane. In terms of biological role, component of the ubiquinol-cytochrome c reductase complex (complex III or cytochrome b-c1 complex) that is part of the mitochondrial respiratory chain. The b-c1 complex mediates electron transfer from ubiquinol to cytochrome c. Contributes to the generation of a proton gradient across the mitochondrial membrane that is then used for ATP synthesis. This Anopheles quadrimaculatus (Common malaria mosquito) protein is Cytochrome b (MT-CYB).